The primary structure comprises 499 residues: Glycerol kinase (499 aa).

Position 11 (threonine 11) interacts with ADP. Threonine 11, serine 12, and serine 13 together coordinate ATP. Threonine 11 is a sn-glycerol 3-phosphate binding site. An ADP-binding site is contributed by arginine 15. Sn-glycerol 3-phosphate-binding residues include arginine 81, glutamate 82, tyrosine 133, and aspartate 242. 5 residues coordinate glycerol: arginine 81, glutamate 82, tyrosine 133, aspartate 242, and glutamine 243. ADP-binding residues include threonine 264 and glycine 309. Residues threonine 264, glycine 309, glutamine 313, and glycine 414 each contribute to the ATP site. ADP-binding residues include glycine 414 and asparagine 418.

The protein belongs to the FGGY kinase family.

It carries out the reaction glycerol + ATP = sn-glycerol 3-phosphate + ADP + H(+). The protein operates within polyol metabolism; glycerol degradation via glycerol kinase pathway; sn-glycerol 3-phosphate from glycerol: step 1/1. Inhibited by fructose 1,6-bisphosphate (FBP). Functionally, key enzyme in the regulation of glycerol uptake and metabolism. Catalyzes the phosphorylation of glycerol to yield sn-glycerol 3-phosphate. In Methylibium petroleiphilum (strain ATCC BAA-1232 / LMG 22953 / PM1), this protein is Glycerol kinase.